The primary structure comprises 356 residues: Histidinol-phosphate aminotransferase (356 aa).

Residue K211 is modified to N6-(pyridoxal phosphate)lysine.

This sequence belongs to the class-II pyridoxal-phosphate-dependent aminotransferase family. Histidinol-phosphate aminotransferase subfamily. Homodimer. Pyridoxal 5'-phosphate is required as a cofactor.

The enzyme catalyses L-histidinol phosphate + 2-oxoglutarate = 3-(imidazol-4-yl)-2-oxopropyl phosphate + L-glutamate. The protein operates within amino-acid biosynthesis; L-histidine biosynthesis; L-histidine from 5-phospho-alpha-D-ribose 1-diphosphate: step 7/9. This chain is Histidinol-phosphate aminotransferase, found in Blochmanniella floridana.